We begin with the raw amino-acid sequence, 1434 residues long: Gag-Pol polyprotein (1434 aa).

Gly-2 carries the N-myristoyl glycine; by host lipid modification. Residues Val-7–Leu-31 form an interaction with Gp41 region. The tract at residues Leu-8–Arg-43 is interaction with host CALM1. Positions Lys-12–Ile-19 are interaction with host AP3D1. The segment at Asp-14–His-33 is interaction with membrane phosphatidylinositol 4,5-bisphosphate and RNA. Positions Trp-16–Arg-22 match the Nuclear export signal motif. A Nuclear localization signal motif is present at residues Lys-26–Lys-32. An interaction with membrane phosphatidylinositol 4,5-bisphosphate region spans residues Glu-73–Ser-77. A compositionally biased stretch (basic and acidic residues) spans Lys-103–Gln-112. The segment at Lys-103 to Val-124 is disordered. Tyr-132 bears the Phosphotyrosine; by host mark. The interval Asn-189–Gln-227 is interaction with human PPIA/CYPA and NUP153. Positions Tyr-277–Leu-363 are dimerization/Multimerization of capsid protein p24. 2 CCHC-type zinc fingers span residues Val-389–Ala-406 and Arg-410–Glu-427. The segment at Glu-443–Ser-483 is disordered. Polar residues predominate over residues Ser-449–Ala-458. The interval Pro-488 to Leu-492 is dimerization of protease. One can recognise a Peptidase A2 domain in the interval Arg-507–Met-576. Asp-512 (for protease activity; shared with dimeric partner) is an active-site residue. 2 dimerization of protease regions span residues Gly-536–Lys-542 and Asn-575–Pro-587. Residues Glu-630–Leu-820 enclose the Reverse transcriptase domain. Positions 696, 771, and 772 each coordinate Mg(2+). Residues Phe-813–His-821 are RT 'primer grip'. Residues Trp-984–Trp-1000 carry the Tryptophan repeat motif motif. In terms of domain architecture, RNase H type-1 spans Ile-1020–Arg-1143. Residues Asp-1029, Glu-1064, Asp-1084, and Asp-1135 each contribute to the Mg(2+) site. The segment at Asp-1149–Gln-1190 adopts an Integrase-type zinc-finger fold. Zn(2+) is bound by residues His-1158, His-1162, Cys-1186, and Cys-1189. The 151-residue stretch at Val-1200–Ile-1350 folds into the Integrase catalytic domain. Mg(2+)-binding residues include Asp-1210, Asp-1262, and Glu-1298. The integrase-type DNA-binding region spans Phe-1369–Asp-1416.

As to quaternary structure, homotrimer; further assembles as hexamers of trimers. Interacts with gp41 (via C-terminus). Interacts with host CALM1; this interaction induces a conformational change in the Matrix protein, triggering exposure of the myristate group. Interacts with host AP3D1; this interaction allows the polyprotein trafficking to multivesicular bodies during virus assembly. Part of the pre-integration complex (PIC) which is composed of viral genome, matrix protein, Vpr and integrase. Homodimer; the homodimer further multimerizes as homohexamers or homopentamers. Interacts with human PPIA/CYPA; This interaction stabilizes the capsid. Interacts with human NUP153. Interacts with host PDZD8; this interaction stabilizes the capsid. Interacts with monkey TRIM5; this interaction destabilizes the capsid. In terms of assembly, homodimer, whose active site consists of two apposed aspartic acid residues. As to quaternary structure, heterodimer of p66 RT and p51 RT (RT p66/p51). Heterodimerization of RT is essential for DNA polymerase activity. The overall folding of the subdomains is similar in p66 RT and p51 RT but the spatial arrangements of the subdomains are dramatically different. Homotetramer; may further associate as a homohexadecamer. Part of the pre-integration complex (PIC) which is composed of viral genome, matrix protein, Vpr and integrase. Interacts with human SMARCB1/INI1 and human PSIP1/LEDGF isoform 1. Interacts with human KPNA3; this interaction might play a role in nuclear import of the pre-integration complex. Interacts with human NUP153; this interaction might play a role in nuclear import of the pre-integration complex. Requires Mg(2+) as cofactor. Post-translationally, specific enzymatic cleavages by the viral protease yield mature proteins. The protease is released by autocatalytic cleavage. The polyprotein is cleaved during and after budding, this process is termed maturation. Proteolytic cleavage of p66 RT removes the RNase H domain to yield the p51 RT subunit. Nucleocapsid protein p7 might be further cleaved after virus entry. Tyrosine phosphorylated presumably in the virion by a host kinase. Phosphorylation is apparently not a major regulator of membrane association. In terms of processing, phosphorylated possibly by host MAPK1; this phosphorylation is necessary for Pin1-mediated virion uncoating. Post-translationally, methylated by host PRMT6, impairing its function by reducing RNA annealing and the initiation of reverse transcription.

It localises to the host cell membrane. The protein resides in the host endosome. Its subcellular location is the host multivesicular body. It is found in the virion membrane. The protein localises to the host nucleus. It localises to the host cytoplasm. The protein resides in the virion. The catalysed reaction is Specific for a P1 residue that is hydrophobic, and P1' variable, but often Pro.. The enzyme catalyses Endohydrolysis of RNA in RNA/DNA hybrids. Three different cleavage modes: 1. sequence-specific internal cleavage of RNA. Human immunodeficiency virus type 1 and Moloney murine leukemia virus enzymes prefer to cleave the RNA strand one nucleotide away from the RNA-DNA junction. 2. RNA 5'-end directed cleavage 13-19 nucleotides from the RNA end. 3. DNA 3'-end directed cleavage 15-20 nucleotides away from the primer terminus.. It catalyses the reaction 3'-end directed exonucleolytic cleavage of viral RNA-DNA hybrid.. It carries out the reaction DNA(n) + a 2'-deoxyribonucleoside 5'-triphosphate = DNA(n+1) + diphosphate. With respect to regulation, protease: The viral protease is inhibited by many synthetic protease inhibitors (PIs), such as amprenavir, atazanavir, indinavir, loprinavir, nelfinavir, ritonavir and saquinavir. Use of protease inhibitors in tritherapy regimens permit more ambitious therapeutic strategies. Reverse transcriptase/ribonuclease H: RT can be inhibited either by nucleoside RT inhibitors (NRTIs) or by non nucleoside RT inhibitors (NNRTIs). NRTIs act as chain terminators, whereas NNRTIs inhibit DNA polymerization by binding a small hydrophobic pocket near the RT active site and inducing an allosteric change in this region. Classical NRTIs are abacavir, adefovir (PMEA), didanosine (ddI), lamivudine (3TC), stavudine (d4T), tenofovir (PMPA), zalcitabine (ddC), and zidovudine (AZT). Classical NNRTIs are atevirdine (BHAP U-87201E), delavirdine, efavirenz (DMP-266), emivirine (I-EBU), and nevirapine (BI-RG-587). The tritherapies used as a basic effective treatment of AIDS associate two NRTIs and one NNRTI. Its function is as follows. Mediates, with Gag polyprotein, the essential events in virion assembly, including binding the plasma membrane, making the protein-protein interactions necessary to create spherical particles, recruiting the viral Env proteins, and packaging the genomic RNA via direct interactions with the RNA packaging sequence (Psi). Gag-Pol polyprotein may regulate its own translation, by the binding genomic RNA in the 5'-UTR. At low concentration, the polyprotein would promote translation, whereas at high concentration, the polyprotein would encapsidate genomic RNA and then shut off translation. Functionally, targets the polyprotein to the plasma membrane via a multipartite membrane-binding signal, that includes its myristoylated N-terminus. Matrix protein is part of the pre-integration complex. Implicated in the release from host cell mediated by Vpu. Binds to RNA. Forms the conical core that encapsulates the genomic RNA-nucleocapsid complex in the virion. Most core are conical, with only 7% tubular. The core is constituted by capsid protein hexamer subunits. The core is disassembled soon after virion entry. Host restriction factors such as TRIM5-alpha or TRIMCyp bind retroviral capsids and cause premature capsid disassembly, leading to blocks in reverse transcription. Capsid restriction by TRIM5 is one of the factors which restricts HIV-1 to the human species. Host PIN1 apparently facilitates the virion uncoating. On the other hand, interactions with PDZD8 or CYPA stabilize the capsid. In terms of biological role, encapsulates and protects viral dimeric unspliced genomic RNA (gRNA). Binds these RNAs through its zinc fingers. Acts as a nucleic acid chaperone which is involved in rearangement of nucleic acid secondary structure during gRNA retrotranscription. Also facilitates template switch leading to recombination. As part of the polyprotein, participates in gRNA dimerization, packaging, tRNA incorporation and virion assembly. Its function is as follows. Aspartyl protease that mediates proteolytic cleavages of Gag and Gag-Pol polyproteins during or shortly after the release of the virion from the plasma membrane. Cleavages take place as an ordered, step-wise cascade to yield mature proteins. This process is called maturation. Displays maximal activity during the budding process just prior to particle release from the cell. Also cleaves Nef and Vif, probably concomitantly with viral structural proteins on maturation of virus particles. Hydrolyzes host EIF4GI and PABP1 in order to shut off the capped cellular mRNA translation. The resulting inhibition of cellular protein synthesis serves to ensure maximal viral gene expression and to evade host immune response. Also mediates cleavage of host YTHDF3. Mediates cleavage of host CARD8, thereby activating the CARD8 inflammasome, leading to the clearance of latent HIV-1 in patient CD4(+) T-cells after viral reactivation; in contrast, HIV-1 can evade CARD8-sensing when its protease remains inactive in infected cells prior to viral budding. Functionally, multifunctional enzyme that converts the viral RNA genome into dsDNA in the cytoplasm, shortly after virus entry into the cell. This enzyme displays a DNA polymerase activity that can copy either DNA or RNA templates, and a ribonuclease H (RNase H) activity that cleaves the RNA strand of RNA-DNA heteroduplexes in a partially processive 3' to 5' endonucleasic mode. Conversion of viral genomic RNA into dsDNA requires many steps. A tRNA(3)-Lys binds to the primer-binding site (PBS) situated at the 5'-end of the viral RNA. RT uses the 3' end of the tRNA primer to perform a short round of RNA-dependent minus-strand DNA synthesis. The reading proceeds through the U5 region and ends after the repeated (R) region which is present at both ends of viral RNA. The portion of the RNA-DNA heteroduplex is digested by the RNase H, resulting in a ssDNA product attached to the tRNA primer. This ssDNA/tRNA hybridizes with the identical R region situated at the 3' end of viral RNA. This template exchange, known as minus-strand DNA strong stop transfer, can be either intra- or intermolecular. RT uses the 3' end of this newly synthesized short ssDNA to perform the RNA-dependent minus-strand DNA synthesis of the whole template. RNase H digests the RNA template except for two polypurine tracts (PPTs) situated at the 5'-end and near the center of the genome. It is not clear if both polymerase and RNase H activities are simultaneous. RNase H probably can proceed both in a polymerase-dependent (RNA cut into small fragments by the same RT performing DNA synthesis) and a polymerase-independent mode (cleavage of remaining RNA fragments by free RTs). Secondly, RT performs DNA-directed plus-strand DNA synthesis using the PPTs that have not been removed by RNase H as primers. PPTs and tRNA primers are then removed by RNase H. The 3' and 5' ssDNA PBS regions hybridize to form a circular dsDNA intermediate. Strand displacement synthesis by RT to the PBS and PPT ends produces a blunt ended, linear dsDNA copy of the viral genome that includes long terminal repeats (LTRs) at both ends. Catalyzes viral DNA integration into the host chromosome, by performing a series of DNA cutting and joining reactions. This enzyme activity takes place after virion entry into a cell and reverse transcription of the RNA genome in dsDNA. The first step in the integration process is 3' processing. This step requires a complex comprising the viral genome, matrix protein, Vpr and integrase. This complex is called the pre-integration complex (PIC). The integrase protein removes 2 nucleotides from each 3' end of the viral DNA, leaving recessed CA OH's at the 3' ends. In the second step, the PIC enters cell nucleus. This process is mediated through integrase and Vpr proteins, and allows the virus to infect a non dividing cell. This ability to enter the nucleus is specific of lentiviruses, other retroviruses cannot and rely on cell division to access cell chromosomes. In the third step, termed strand transfer, the integrase protein joins the previously processed 3' ends to the 5' ends of strands of target cellular DNA at the site of integration. The 5'-ends are produced by integrase-catalyzed staggered cuts, 5 bp apart. A Y-shaped, gapped, recombination intermediate results, with the 5'-ends of the viral DNA strands and the 3' ends of target DNA strands remaining unjoined, flanking a gap of 5 bp. The last step is viral DNA integration into host chromosome. This involves host DNA repair synthesis in which the 5 bp gaps between the unjoined strands are filled in and then ligated. Since this process occurs at both cuts flanking the HIV genome, a 5 bp duplication of host DNA is produced at the ends of HIV-1 integration. Alternatively, Integrase may catalyze the excision of viral DNA just after strand transfer, this is termed disintegration. This is Gag-Pol polyprotein (gag-pol) from Homo sapiens (Human).